Reading from the N-terminus, the 644-residue chain is Keratin, type II cytoskeletal 1 (644 aa).

Residues 2–179 (SRQFSSRSGY…DPEIQKVKSR (178 aa)) are head. Position 12 is an omega-N-methylarginine (Arg-12). Phosphoserine occurs at positions 18 and 21. Over residues 22–38 (AGIINYQRRTTSSSTRR) the composition is skewed to low complexity. The interval 22-47 (AGIINYQRRTTSSSTRRSGGGGGRFS) is disordered. The residue at position 45 (Arg-45) is an Omega-N-methylarginine. Phosphoserine is present on Ser-66. The residue at position 82 (Arg-82) is an Omega-N-methylarginine. The tract at residues 180-215 (EREQIKSLNNQFASFIDKVRFLEQQNQVLQTKWELL) is coil 1A. Positions 180 to 493 (EREQIKSLNN…TLLEGEESRM (314 aa)) constitute an IF rod domain. The interval 216-234 (QQVDTSTRTHNLEPYFESF) is linker 1. A coil 1B region spans residues 235–326 (INNLRRRVDQ…ALYQAELSQM (92 aa)). Position 276 is an N6,N6-dimethyllysine (Lys-276). The tract at residues 327–350 (QTQISETNVILSMDNNRSLDLDSI) is linker 12. Ser-344 is modified (phosphoserine). Positions 351–489 (IAEVKAQYED…ATYRTLLEGE (139 aa)) are coil 2. 2 disordered regions span residues 489–523 (EESR…GGGG) and 568–644 (SGGG…GVTR). Residues 490–644 (ESRMSGECAP…VSTTYSGVTR (155 aa)) form a tail region. Low complexity predominate over residues 501 to 511 (VSVSVSTSHTT). 2 stretches are compositionally biased toward gly residues: residues 513 to 523 (SGGGSRGGGGG) and 568 to 620 (SGGG…GSSS). An omega-N-methylarginine mark is found at Arg-518 and Arg-588. Residues 621 to 631 (GGVKSSGGSSS) show a composition bias toward low complexity. Polar residues predominate over residues 632 to 644 (VKFVSTTYSGVTR).

Belongs to the intermediate filament family. As to quaternary structure, heterotetramer of two type I and two type II keratins. Heterodimer with KRT10. Two heterodimers of KRT1 and KRT10 form a heterotetramer. Forms a heterodimer with KRT14; the interaction is more abundant in the absence of KRT5. Interacts with PLEC isoform 1C, when in a heterodimer with KRT10. Interacts with ITGB1 in the presence of RACK1 and SRC, and with RACK1. Interacts with C1QBP; the association represents a cell surface kininogen receptor. Interacts with EPPK1; interaction is dependent of higher-order structure of intermediate filament. In terms of processing, undergoes deimination of some arginine residues (citrullination). In terms of tissue distribution, the source of this protein is neonatal foreskin. The 67-kDa type II keratins are expressed in terminally differentiating epidermis.

It is found in the cell membrane. Its subcellular location is the cytoplasm. May regulate the activity of kinases such as PKC and SRC via binding to integrin beta-1 (ITB1) and the receptor of activated protein C kinase 1 (RACK1). In complex with C1QBP is a high affinity receptor for kininogen-1/HMWK. The sequence is that of Keratin, type II cytoskeletal 1 (KRT1) from Homo sapiens (Human).